Consider the following 248-residue polypeptide: Tropomyosin alpha-4 chain (248 aa).

Residue A2 is modified to N-acetylalanine. Positions 2 to 248 form a coiled coil; it reads AGLNSLEAVK…DQTLDELNCI (247 aa). Phosphoserine is present on S6. A disordered region spans residues 16–47; the sequence is ALQQQADEAEDRAQGLQRELDGERERREKAEG. Residues 33-47 are compositionally biased toward basic and acidic residues; the sequence is RELDGERERREKAEG. An N6-acetyllysine mark is found at K177 and K215. T216 is subject to Phosphothreonine.

It belongs to the tropomyosin family. As to quaternary structure, homodimer. Heterodimer of an alpha (TPM1, TPM3 or TPM4) and a beta (TPM2) chain.

It is found in the cytoplasm. It localises to the cytoskeleton. Functionally, binds to actin filaments in muscle and non-muscle cells. Plays a central role, in association with the troponin complex, in the calcium dependent regulation of vertebrate striated muscle contraction. Smooth muscle contraction is regulated by interaction with caldesmon. In non-muscle cells is implicated in stabilizing cytoskeleton actin filaments. Binds calcium. In Equus caballus (Horse), this protein is Tropomyosin alpha-4 chain (TPM4).